The sequence spans 273 residues: Hemin import ATP-binding protein HmuV (273 aa).

The 255-residue stretch at 2–256 (LTAHHLDVAR…AHIAQCYGFA (255 aa)) folds into the ABC transporter domain. 34-41 (GRNGAGKS) lines the ATP pocket.

Belongs to the ABC transporter superfamily. Heme (hemin) importer (TC 3.A.1.14.5) family. In terms of assembly, the complex is composed of two ATP-binding proteins (HmuV), two transmembrane proteins (HmuU) and a solute-binding protein (HmuT).

It is found in the cell inner membrane. In terms of biological role, part of the ABC transporter complex HmuTUV involved in hemin import. Responsible for energy coupling to the transport system. This chain is Hemin import ATP-binding protein HmuV, found in Burkholderia ambifaria (strain ATCC BAA-244 / DSM 16087 / CCUG 44356 / LMG 19182 / AMMD) (Burkholderia cepacia (strain AMMD)).